A 206-amino-acid polypeptide reads, in one-letter code: Ras-related protein Rab-18 (206 aa).

At M1 the chain carries N-acetylmethionine. Positions 17, 20, 21, 22, 23, 34, 35, 40, 66, 123, and 125 each coordinate GTP. S22 contributes to the Mg(2+) binding site. Short sequence motifs (switch) lie at residues 31-45 (DTFDPELAATIGVDF) and 63-80 (DTAGQERFRTLTPSYYRG). T40 is a Mg(2+) binding site. Phosphoserine is present on S144. A152 serves as a coordination point for GTP. The S-palmitoyl cysteine moiety is linked to residue C199. C203 carries the cysteine methyl ester modification. The S-geranylgeranyl cysteine moiety is linked to residue C203. A propeptide spans 204 to 206 (SVL) (removed in mature form).

Belongs to the small GTPase superfamily. Rab family. Interacts (in GTP-bound form) with ZFYVE1. Interacts with ZW10 and this interaction is enhanced in the presence of ZFYVE1. Interacts with BSCL2. Requires Mg(2+) as cofactor. Expression is high in the brain, moderate in the pituitary, and low in the liver. Detected in all tissues. Highly enriched on apical endocytic structures in polarized epithelial cells of kidney proximal tubules. Detected on both the apical and basolateral domains in epithelial cells of the intestine.

The protein resides in the endoplasmic reticulum membrane. The protein localises to the golgi apparatus. It localises to the cis-Golgi network membrane. Its subcellular location is the lipid droplet. It is found in the apical cell membrane. The catalysed reaction is GTP + H2O = GDP + phosphate + H(+). Regulated by guanine nucleotide exchange factor (GEF) RAB3GAP1-RAB3GAP2 complex at the cis-Golgi membrane which promotes the exchange of bound GDP for free GTP. Regulated by GTPase activating protein (GAP) TBC1D20 at the ER membrane which increases the GTP hydrolysis activity. Inhibited by GDP dissociation inhibitors (GDIs) which prevent Rab-GDP dissociation. Functionally, the small GTPases Rab are key regulators of intracellular membrane trafficking, from the formation of transport vesicles to their fusion with membranes. Rabs cycle between an inactive GDP-bound form and an active GTP-bound form that is able to recruit to membranes different sets of downstream effectors directly responsible for vesicle formation, movement, tethering and fusion. RAB18 is required for the localization of ZFYVE1 to lipid droplets and for its function in mediating the formation of endoplasmic reticulum-lipid droplets (ER-LD) contacts. Also required for maintaining endoplasmic reticulum structure. Plays a role in apical endocytosis/recycling. Plays a key role in eye and brain development and neurodegeneration. The polypeptide is Ras-related protein Rab-18 (Mus musculus (Mouse)).